The chain runs to 520 residues: MPDAMSAGAILRALLPEMLLSGGAMLLLLASVWTPQGNQPGAAEGAERTSVLARFGVILCLVVGLAVVIAWGDGAAGTPDGRVAGDGFRWAVDLVILLGTALALMLLEAEHQRSAAFGPEVPSLMLLASTGMMVLAGARDLMFVFLGVELMSLAVYVLAGVNRRSARSAEAAVKYFLLGAISSGFLLYGMALLFGATGSTRLQDITEWAAAQATLSPLFMSGVALLLVGLAFKVAAAPFHLWTPDVYDGAPLPVTAFMSATVKTAAFAVFARIMIEGLAVAAPRWHMGLWWLAAVTMVVGNVFALSQRNLVRMLAYSSIAHAGYLLVSIIVGDAAGTSALIFYVVSYTLATMGAFGVLITINGGRDRAPTLDDIAGLWLVRPWLAIAMTVFLLAFMGMPVLGGMGFFAKWYILQAALQAPAPQTILAVVLVIASAVSAAYYLAVVSAMFMRPRPEGQPVPSTTPLNQSLIATAAVALLVFGLYPTPIMELARRATTTTSPTSNPAAPRGEVRLQTASVPR.

14 consecutive transmembrane segments (helical) span residues 13 to 33, 55 to 75, 87 to 107, 115 to 135, 141 to 161, 176 to 196, 219 to 239, 250 to 270, 285 to 305, 313 to 333, 339 to 359, 383 to 403, 425 to 445, and 468 to 488; these read ALLP…ASVW, FGVI…GDGA, GFRW…LMLL, AAFG…MMVL, LMFV…LAGV, FLLG…LFGA, FMSG…AAPF, APLP…FAVF, WHMG…VFAL, MLAY…IVGD, ALIF…GVLI, WLAI…VLGG, ILAV…LAVV, and SLIA…TPIM. Over residues 494-508 the composition is skewed to low complexity; the sequence is ATTTTSPTSNPAAPR. The interval 494 to 520 is disordered; sequence ATTTTSPTSNPAAPRGEVRLQTASVPR.

Belongs to the complex I subunit 2 family. As to quaternary structure, NDH-1 is composed of 14 different subunits. Subunits NuoA, H, J, K, L, M, N constitute the membrane sector of the complex.

The protein localises to the cell inner membrane. The enzyme catalyses a quinone + NADH + 5 H(+)(in) = a quinol + NAD(+) + 4 H(+)(out). Its function is as follows. NDH-1 shuttles electrons from NADH, via FMN and iron-sulfur (Fe-S) centers, to quinones in the respiratory chain. The immediate electron acceptor for the enzyme in this species is believed to be ubiquinone. Couples the redox reaction to proton translocation (for every two electrons transferred, four hydrogen ions are translocated across the cytoplasmic membrane), and thus conserves the redox energy in a proton gradient. In Gemmatimonas aurantiaca (strain DSM 14586 / JCM 11422 / NBRC 100505 / T-27), this protein is NADH-quinone oxidoreductase subunit N.